The primary structure comprises 316 residues: Transaldolase (316 aa).

The Schiff-base intermediate with substrate role is filled by Lys-127.

Belongs to the transaldolase family. Type 2 subfamily.

It is found in the cytoplasm. The enzyme catalyses D-sedoheptulose 7-phosphate + D-glyceraldehyde 3-phosphate = D-erythrose 4-phosphate + beta-D-fructose 6-phosphate. Its pathway is carbohydrate degradation; pentose phosphate pathway; D-glyceraldehyde 3-phosphate and beta-D-fructose 6-phosphate from D-ribose 5-phosphate and D-xylulose 5-phosphate (non-oxidative stage): step 2/3. Its function is as follows. Transaldolase is important for the balance of metabolites in the pentose-phosphate pathway. The chain is Transaldolase from Helicobacter pylori (strain P12).